Reading from the N-terminus, the 301-residue chain is MTFSQIILTLQKYWNEQGCIIVQPYDMPAGAGTYHWATFLRSLGKKPWKAAYVAPSRRPTDGRYGENPNRLGAYYQFQVILKPSPDNIQELYLKSLEILGLDIKNHDIRFVEDNWESPTLGAWGLGWEVWLDGMEITQFTYFQQVGGIPCELISGEITYGLERLAMYLQDIDNVYDIVWDDNGGHKVLYGDVHKQSEFEFSKYNFELADTKMLFTQFDNCFKECKRILEQKYIKDGVELDGLALPAYDYCMLAAHTFNVLDARGAISVTQRQDYILKIRELAKGCALAYSKNSAQISSKKR.

It belongs to the class-II aminoacyl-tRNA synthetase family. Tetramer of two alpha and two beta subunits.

Its subcellular location is the cytoplasm. The enzyme catalyses tRNA(Gly) + glycine + ATP = glycyl-tRNA(Gly) + AMP + diphosphate. In Campylobacter hominis (strain ATCC BAA-381 / DSM 21671 / CCUG 45161 / LMG 19568 / NCTC 13146 / CH001A), this protein is Glycine--tRNA ligase alpha subunit.